Consider the following 156-residue polypeptide: ATP synthase subunit b (156 aa).

Residues 3-23 (ITLTIFAQALAFAGLIWIVAT) traverse the membrane as a helical segment.

The protein belongs to the ATPase B chain family. As to quaternary structure, F-type ATPases have 2 components, F(1) - the catalytic core - and F(0) - the membrane proton channel. F(1) has five subunits: alpha(3), beta(3), gamma(1), delta(1), epsilon(1). F(0) has three main subunits: a(1), b(2) and c(10-14). The alpha and beta chains form an alternating ring which encloses part of the gamma chain. F(1) is attached to F(0) by a central stalk formed by the gamma and epsilon chains, while a peripheral stalk is formed by the delta and b chains.

It is found in the cell inner membrane. In terms of biological role, f(1)F(0) ATP synthase produces ATP from ADP in the presence of a proton or sodium gradient. F-type ATPases consist of two structural domains, F(1) containing the extramembraneous catalytic core and F(0) containing the membrane proton channel, linked together by a central stalk and a peripheral stalk. During catalysis, ATP synthesis in the catalytic domain of F(1) is coupled via a rotary mechanism of the central stalk subunits to proton translocation. Its function is as follows. Component of the F(0) channel, it forms part of the peripheral stalk, linking F(1) to F(0). This chain is ATP synthase subunit b, found in Xanthomonas oryzae pv. oryzae (strain MAFF 311018).